Reading from the N-terminus, the 507-residue chain is ATP synthase subunit alpha, chloroplastic (507 aa).

170 to 177 (GDRQTGKT) contacts ATP.

The protein belongs to the ATPase alpha/beta chains family. As to quaternary structure, F-type ATPases have 2 components, CF(1) - the catalytic core - and CF(0) - the membrane proton channel. CF(1) has five subunits: alpha(3), beta(3), gamma(1), delta(1), epsilon(1). CF(0) has four main subunits: a, b, b' and c.

It localises to the plastid. It is found in the chloroplast thylakoid membrane. The enzyme catalyses ATP + H2O + 4 H(+)(in) = ADP + phosphate + 5 H(+)(out). Produces ATP from ADP in the presence of a proton gradient across the membrane. The alpha chain is a regulatory subunit. The protein is ATP synthase subunit alpha, chloroplastic of Acorus calamus var. americanus (American sweet flag).